The chain runs to 457 residues: Cysteine--tRNA ligase (457 aa).

Cys-27 contributes to the Zn(2+) binding site. A 'HIGH' region motif is present at residues 29 to 39 (PTVYDFAHIGN). Zn(2+)-binding residues include Cys-211, His-236, and Glu-240. Residues 269–273 (KMSKS) carry the 'KMSKS' region motif. An ATP-binding site is contributed by Lys-272.

This sequence belongs to the class-I aminoacyl-tRNA synthetase family. Monomer. Zn(2+) serves as cofactor.

It is found in the cytoplasm. The enzyme catalyses tRNA(Cys) + L-cysteine + ATP = L-cysteinyl-tRNA(Cys) + AMP + diphosphate. The protein is Cysteine--tRNA ligase of Ehrlichia ruminantium (strain Gardel).